A 301-amino-acid polypeptide reads, in one-letter code: Ornithine carbamoyltransferase (301 aa).

Carbamoyl phosphate is bound by residues Arg-107 and 134-137 (HPLQ). L-ornithine contacts are provided by residues Asn-165, Asp-220, and 224–225 (SM). Carbamoyl phosphate-binding positions include 260 to 261 (CL) and Arg-288.

The protein belongs to the aspartate/ornithine carbamoyltransferase superfamily. OTCase family. In terms of assembly, homotrimer.

It is found in the cytoplasm. The enzyme catalyses carbamoyl phosphate + L-ornithine = L-citrulline + phosphate + H(+). It participates in amino-acid biosynthesis; L-arginine biosynthesis; L-arginine from L-ornithine and carbamoyl phosphate: step 1/3. Its activity is regulated as follows. Inhibited by delta-N-phosphonoacetyl-L-ornithine. Functionally, reversibly catalyzes the transfer of the carbamoyl group from carbamoyl phosphate (CP) to the N(epsilon) atom of ornithine (ORN) to produce L-citrulline, which is a substrate for argininosuccinate synthetase, the enzyme involved in the final step in arginine biosynthesis. This chain is Ornithine carbamoyltransferase, found in Thermus thermophilus (strain ATCC BAA-163 / DSM 7039 / HB27).